The chain runs to 330 residues: MAAGSVESQRSQAASERPVAGQAGVLPCLELPSYAAACALVGSRYSCLVAAPHRRHIALSPRYLSRKRTGIREQLDAELLRYSESLLGVPIAYDNIRVVGELGDIYDDQGHIHLNIEADFVIFCPEPGQTLMGTVNKVSSSHIGCLVHGCFNASIPKPEQMSYEEWQTLEIHVGDELEFDVFRLDSDSAGVFCIRGKLSTTSLQLKHSAVSEDVAETVVEEVVEKTPKKKKKKKDKDTDTCGTVDSVTEVADVTDVTPQEETDIPCSDNVNDFFEEEPKKKKKKKKRHQEDQDPIFQASDSSGYQSDHNKKKKKRKHSEEANFESPKKRQ.

The interval 251–330 (ADVTDVTPQE…ANFESPKKRQ (80 aa)) is disordered. Phosphoserine occurs at positions 306, 318, and 325. Basic and acidic residues predominate over residues 317–330 (HSEEANFESPKKRQ).

The protein belongs to the eukaryotic RPA43 RNA polymerase subunit family. Component of the RNA polymerase I (Pol I) complex consisting of 13 subunits: a ten-subunit catalytic core composed of POLR1A/RPA1, POLR1B/RPA2, POLR1C/RPAC1, POLR1D/RPAC2, POLR1H/RPA12, POLR2E/RPABC1, POLR2F/RPABC2, POLR2H/RPABC3, POLR2K/RPABC4 and POLR2L/RPABC5; a mobile stalk subunit POLR1F/RPA43 protruding from the core and additional subunits homologous to general transcription factors POLR1E/RPA49 and POLR1G/RPA34. Interacts with RRN3/TIF-IA. Interacts with RRN3/TIF-IA. As to expression, widely expressed.

It localises to the nucleus. The protein resides in the nucleolus. Its function is as follows. Component of RNA polymerase I (Pol I), a DNA-dependent RNA polymerase which synthesizes ribosomal RNA precursors using the four ribonucleoside triphosphates as substrates. Through its association with RRN3/TIF-IA may be involved in recruitment of Pol I to rDNA promoters. This is DNA-directed RNA polymerase I subunit RPA43 from Mus musculus (Mouse).